A 352-amino-acid polypeptide reads, in one-letter code: C-C chemokine receptor type 5 (352 aa).

Over 1-30 (MDYQVSSPTYDIDYYTSEPCQKVNVKQIAA) the chain is Extracellular. A Sulfotyrosine modification is found at Tyr3. Residues Ser6 and Ser7 are each glycosylated (O-linked (GalNAc...) serine). Tyr10, Tyr14, and Tyr15 each carry sulfotyrosine. 2 disulfides stabilise this stretch: Cys20-Cys269 and Cys101-Cys178. The helical transmembrane segment at 31-58 (RLLPPLYSLVFIFGFVGNILVVLILINC) threads the bilayer. The Cytoplasmic portion of the chain corresponds to 59-68 (KRLKSMTDIY). A helical transmembrane segment spans residues 69-89 (LLNLAISDLFFLLTVPFWAHY). Topologically, residues 90-102 (AAAQWDFGNTMCQ) are extracellular. A helical transmembrane segment spans residues 103-124 (LLTGLYFIGFFSGIFFIILLTI). The Cytoplasmic portion of the chain corresponds to 125–141 (DRYLAIVHAVFALKART). The helical transmembrane segment at 142 to 166 (VTFGVVTSVITWVVAVFASLPGIIF) threads the bilayer. The Extracellular segment spans residues 167–198 (TRSQREGVHYTCSSHFPYSQYQFWKNFQTLKI). A helical transmembrane segment spans residues 199-218 (VILGLVLPLLVMVICYSGIL). Residues 219-235 (KTLLRCRNEKKRHRAVR) lie on the Cytoplasmic side of the membrane. The chain crosses the membrane as a helical span at residues 236–260 (LIFTIMIVYFLFWAPYNIVLLLNTF). Topologically, residues 261 to 277 (QEFFGLNNCSSSNRLDQ) are extracellular. Residues 278 to 301 (AMQVTETLGMTHCCINPIIYAFVG) traverse the membrane as a helical segment. Topologically, residues 302-352 (EKFRNYLLVFFQKHIAKRFCKCCSIFQQEAPERASSVYTRSTGEQETSVGL) are cytoplasmic. Residues Cys321, Cys323, and Cys324 are each lipidated (S-palmitoyl cysteine). 4 positions are modified to phosphoserine; by BARK1: Ser336, Ser337, Ser342, and Ser349.

Belongs to the G-protein coupled receptor 1 family. Interacts with PRAF2. Efficient ligand binding to CCL3/MIP-1alpha and CCL4/MIP-1beta requires sulfation, O-glycosylation and sialic acid modifications. Glycosylation on Ser-6 is required for efficient binding of CCL4. Interacts with GRK2. Interacts with ARRB1 and ARRB2. Interacts with CNIH4. Interacts with S100A4; this interaction stimulates T-lymphocyte chemotaxis. Post-translationally, sulfated on at least 2 of the N-terminal tyrosines. Sulfation is required for efficient binding of the chemokines, CCL3 and CCL4. Palmitoylation in the C-terminal is important for cell surface expression. In terms of processing, phosphorylation on serine residues in the C-terminal is stimulated by binding CC chemokines especially by APO-RANTES. Post-translationally, O-glycosylated, but not N-glycosylated. Ser-6 appears to be the major site even if Ser-7 may be also O-glycosylated. Also sialylated glycans present which contribute to chemokine binding. Thr-16 and Ser-17 may also be glycosylated and, if so, with small moieties such as a T-antigen.

It localises to the cell membrane. Its function is as follows. Receptor for a number of inflammatory CC-chemokines including CCL3/MIP-1-alpha, CCL4/MIP-1-beta and RANTES and subsequently transduces a signal by increasing the intracellular calcium ion level. May play a role in the control of granulocytic lineage proliferation or differentiation. Participates in T-lymphocyte migration to the infection site by acting as a chemotactic receptor. The sequence is that of C-C chemokine receptor type 5 (CCR5) from Rhinopithecus avunculus (Tonkin snub-nosed monkey).